Reading from the N-terminus, the 131-residue chain is Profilin-2 (131 aa).

The protein belongs to the profilin family. Occurs in many kinds of cells as a complex with monomeric actin in a 1:1 ratio.

The protein resides in the cytoplasm. Its subcellular location is the cytoskeleton. Binds to actin and affects the structure of the cytoskeleton. At high concentrations, profilin prevents the polymerization of actin, whereas it enhances it at low concentrations. By binding to PIP2, it inhibits the formation of IP3 and DG. This is Profilin-2 from Ambrosia artemisiifolia (Common ragweed).